The following is a 212-amino-acid chain: Probable nicotinate-nucleotide adenylyltransferase (212 aa).

Belongs to the NadD family.

The catalysed reaction is nicotinate beta-D-ribonucleotide + ATP + H(+) = deamido-NAD(+) + diphosphate. It functions in the pathway cofactor biosynthesis; NAD(+) biosynthesis; deamido-NAD(+) from nicotinate D-ribonucleotide: step 1/1. Catalyzes the reversible adenylation of nicotinate mononucleotide (NaMN) to nicotinic acid adenine dinucleotide (NaAD). This chain is Probable nicotinate-nucleotide adenylyltransferase, found in Methylibium petroleiphilum (strain ATCC BAA-1232 / LMG 22953 / PM1).